Consider the following 1969-residue polypeptide: Echinoderm microtubule-associated protein-like 5 (1969 aa).

10 WD repeats span residues Gly-59 to Val-100, Val-104 to Met-145, Gly-148 to Lys-187, Gly-195 to Gln-233, Ala-235 to Asp-273, Gly-280 to Gln-321, His-323 to Arg-362, Asp-406 to Gly-445, Gly-449 to Ser-488, and Gly-561 to Asp-601. The tract at residues Glu-609–Ile-633 is disordered. The segment covering Ser-619–Ile-633 has biased composition (acidic residues). WD repeat units lie at residues Gly-725–Ile-766, His-770–Ile-811, Gly-814–Arg-853, Gly-861–Lys-900, Ala-901–Ala-940, His-996–Ala-1035, Lys-1038–Ser-1077, His-1080–Ile-1120, and Ala-1236–Lys-1276. 2 disordered regions span residues Arg-1274 to Asp-1297 and Gln-1326 to Lys-1355. Positions Ser-1281–Tyr-1294 are enriched in acidic residues. Positions Gln-1326–Pro-1337 are enriched in basic and acidic residues. WD repeat units follow at residues Glu-1412 to Ile-1463, Tyr-1467 to Ser-1508, Gly-1511 to Lys-1550, Ala-1560 to Ala-1598, Ala-1600 to Arg-1646, Gly-1691 to Lys-1731, Asn-1733 to Arg-1774, Asp-1775 to Arg-1814, Ala-1887 to Lys-1926, and Gly-1932 to His-1969.

The protein belongs to the WD repeat EMAP family.

The protein localises to the cytoplasm. Its subcellular location is the cytoskeleton. May modify the assembly dynamics of microtubules, such that microtubules are slightly longer, but more dynamic. The polypeptide is Echinoderm microtubule-associated protein-like 5 (EML5) (Homo sapiens (Human)).